The primary structure comprises 449 residues: Adenylosuccinate synthetase (449 aa).

GTP-binding positions include 12-18 and 40-42; these read GDEGKGK and GHT. Asp13 acts as the Proton acceptor in catalysis. 2 residues coordinate Mg(2+): Asp13 and Gly40. Residues 13 to 16, 38 to 41, Thr128, Arg142, Gln223, Thr238, and Arg302 each bind IMP; these read DEGK and NAGH. The active-site Proton donor is the His41. 298–304 serves as a coordination point for substrate; it reads TTTGRQR. GTP contacts are provided by residues Arg304, 330–332, and 412–414; these read KLD and SLG.

Belongs to the adenylosuccinate synthetase family. In terms of assembly, homodimer. It depends on Mg(2+) as a cofactor.

It is found in the cytoplasm. It carries out the reaction IMP + L-aspartate + GTP = N(6)-(1,2-dicarboxyethyl)-AMP + GDP + phosphate + 2 H(+). It functions in the pathway purine metabolism; AMP biosynthesis via de novo pathway; AMP from IMP: step 1/2. Its function is as follows. Plays an important role in the de novo pathway of purine nucleotide biosynthesis. Catalyzes the first committed step in the biosynthesis of AMP from IMP. This is Adenylosuccinate synthetase from Synechococcus sp. (strain JA-2-3B'a(2-13)) (Cyanobacteria bacterium Yellowstone B-Prime).